Here is a 350-residue protein sequence, read N- to C-terminus: NAD-dependent protein deacetylase sirtuin-2 (350 aa).

The short motif at 4–14 (LRNLFTQTLGL) is the Nuclear export signal element. Ser16 bears the Phosphoserine mark. Residues 20 to 301 (RLLDELTLEG…LALADLLGWK (282 aa)) enclose the Deacetylase sirtuin-type domain. NAD(+)-binding positions include 48–52 (AGIST) and 58–60 (DFR). A Phosphoserine modification is found at Ser63. NAD(+) is bound at residue 130-133 (QNID). His150 serves as the catalytic Proton acceptor. Residues Cys158 and Cys163 each contribute to the Zn(2+) site. Phosphoserine is present on Ser170. Zn(2+) contacts are provided by Cys184 and Cys187. Residues 225 to 226 (TS), 249 to 251 (NKE), and Cys287 contribute to the NAD(+) site. Positions 312 to 350 (ANIDAQSGSQASNPSATVSPRKSPPPAKEAARTKEKEEH) are disordered. Over residues 315–331 (DAQSGSQASNPSATVSP) the composition is skewed to polar residues. 2 positions are modified to phosphoserine: Ser330 and Ser334. Over residues 340–350 (EAARTKEKEEH) the composition is skewed to basic and acidic residues.

Belongs to the sirtuin family. Class I subfamily. In terms of assembly, interacts with CDC20, FOXO3 and FZR1. Associates with microtubules in primary cortical mature neurons. Homotrimer. Interacts (via both phosphorylated, unphosphorylated, active or inactive forms) with HDAC6; the interaction is necessary for the complex to interact with alpha-tubulin, suggesting that these proteins belong to a large complex that deacetylates the cytoskeleton. Interacts with FOXO1; the interaction is disrupted upon serum-starvation or oxidative stress, leading to increased level of acetylated FOXO1 and induction of autophagy. Interacts with RELA; the interaction occurs in the cytoplasm and is increased in a TNF-alpha-dependent manner. Interacts with HOXA10; the interaction is direct. Interacts with YWHAB and YWHAG; the interactions occur in a AKT-dependent manner and increase SIRT2-dependent TP53 deacetylation. Interacts with MAPK1/ERK2 and MAPK3/ERK1; the interactions increase SIRT2 stability and deacetylation activity. Interacts (phosphorylated form) with KMT5A isoform 2; the interaction is direct, stimulates KMT5A-mediated methyltransferase activity on histone at 'Lys-20' (H4K20me1) and is increased in a H(2)O(2)-induced oxidative stress-dependent manner. Interacts with G6PD; the interaction is enhanced by H(2)O(2) treatment. Interacts with a G1/S-specific cyclin E-CDK2 complex. Interacts with AURKA, CDK5R1 (p35 form) and CDK5 and HIF1A. Interacts with the tRNA ligase SARS1; recruited to the VEGFA promoter via interaction with SARS1. Interacts with BEX4; negatively regulates alpha-tubulin deacetylation by SIRT2. The cofactor is Zn(2+). In terms of processing, phosphorylated at phosphoserine and phosphothreonine. Phosphorylated at Ser-330 by a mitotic kinase CDK1/cyclin B at the G2/M transition; phosphorylation regulates the delay in cell-cycle progression. Phosphorylated at Ser-330 by a mitotic kinase G1/S-specific cyclin E/Cdk2 complex; phosphorylation inactivates SIRT2-mediated alpha-tubulin deacetylation and thereby negatively regulates cell adhesion, cell migration and neurite outgrowth during neuronal differentiation. Phosphorylated by cyclin A/Cdk2 and p35-Cdk5 complexes and to a lesser extent by the cyclin D3/Cdk4 and cyclin B/Cdk1, in vitro. Dephosphorylated at Ser-330 by CDC14A and CDC14B around early anaphase. Post-translationally, acetylated by EP300; acetylation leads both to the decreased of SIRT2-mediated alpha-tubulin deacetylase activity and SIRT2-mediated down-regulation of TP53 transcriptional activity. Ubiquitinated. In terms of tissue distribution, expressed in the cerebellum, cerebral cortex and cervival spinal cord. Expressed in Purkinje cells, oligodendrocytes and Schwann cells (at protein level). Expressed in the central nervous system (CNS).

It localises to the nucleus. The protein localises to the cytoplasm. The protein resides in the perinuclear region. Its subcellular location is the cytoskeleton. It is found in the microtubule organizing center. It localises to the centrosome. The protein localises to the centriole. The protein resides in the spindle. Its subcellular location is the midbody. It is found in the chromosome. It localises to the perikaryon. The protein localises to the cell projection. The protein resides in the growth cone. Its subcellular location is the myelin membrane. It catalyses the reaction N(6)-acetyl-L-lysyl-[protein] + NAD(+) + H2O = 2''-O-acetyl-ADP-D-ribose + nicotinamide + L-lysyl-[protein]. The catalysed reaction is N(6)-tetradecanoyl-L-lysyl-[protein] + NAD(+) + H2O = 2''-O-tetradecanoyl-ADP-D-ribose + nicotinamide + L-lysyl-[protein]. The enzyme catalyses N(6)-hexadecanoyl-L-lysyl-[protein] + NAD(+) + H2O = 2''-O-hexadecanoyl-ADP-D-ribose + nicotinamide + L-lysyl-[protein]. With respect to regulation, inhibited by Sirtinol, A3 and M15 small molecules. Inhibited by nicotinamide. Inhibited by a macrocyclic peptide inhibitor S2iL5. Inhibited by EP300-induced acetylation. In terms of biological role, NAD-dependent protein deacetylase, which deacetylates internal lysines on histone and alpha-tubulin as well as many other proteins such as key transcription factors. Participates in the modulation of multiple and diverse biological processes such as cell cycle control, genomic integrity, microtubule dynamics, cell differentiation, metabolic networks, and autophagy. Plays a major role in the control of cell cycle progression and genomic stability. Functions in the antephase checkpoint preventing precocious mitotic entry in response to microtubule stress agents, and hence allowing proper inheritance of chromosomes. Positively regulates the anaphase promoting complex/cyclosome (APC/C) ubiquitin ligase complex activity by deacetylating CDC20 and FZR1, then allowing progression through mitosis. Associates both with chromatin at transcriptional start sites (TSSs) and enhancers of active genes. Plays a role in cell cycle and chromatin compaction through epigenetic modulation of the regulation of histone H4 'Lys-20' methylation (H4K20me1) during early mitosis. Specifically deacetylates histone H4 at 'Lys-16' (H4K16ac) between the G2/M transition and metaphase enabling H4K20me1 deposition by KMT5A leading to ulterior levels of H4K20me2 and H4K20me3 deposition throughout cell cycle, and mitotic S-phase progression. Deacetylates KMT5A modulating KMT5A chromatin localization during the mitotic stress response. Also deacetylates histone H3 at 'Lys-57' (H3K56ac) during the mitotic G2/M transition. During oocyte meiosis progression, may deacetylate histone H4 at 'Lys-16' (H4K16ac) and alpha-tubulin, regulating spindle assembly and chromosome alignment by influencing microtubule dynamics and kinetochore function. Deacetylates histone H4 at 'Lys-16' (H4K16ac) at the VEGFA promoter and thereby contributes to regulate expression of VEGFA, a key regulator of angiogenesis. Deacetylates alpha-tubulin at 'Lys-40' and hence controls neuronal motility, oligodendroglial cell arbor projection processes and proliferation of non-neuronal cells. Phosphorylation at Ser-368 by a G1/S-specific cyclin E-CDK2 complex inactivates SIRT2-mediated alpha-tubulin deacetylation, negatively regulating cell adhesion, cell migration and neurite outgrowth during neuronal differentiation. Deacetylates PARD3 and participates in the regulation of Schwann cell peripheral myelination formation during early postnatal development and during postinjury remyelination. Involved in several cellular metabolic pathways. Plays a role in the regulation of blood glucose homeostasis by deacetylating and stabilizing phosphoenolpyruvate carboxykinase PCK1 activity in response to low nutrient availability. Acts as a key regulator in the pentose phosphate pathway (PPP) by deacetylating and activating the glucose-6-phosphate G6PD enzyme, and therefore, stimulates the production of cytosolic NADPH to counteract oxidative damage. Maintains energy homeostasis in response to nutrient deprivation as well as energy expenditure by inhibiting adipogenesis and promoting lipolysis. Attenuates adipocyte differentiation by deacetylating and promoting FOXO1 interaction to PPARG and subsequent repression of PPARG-dependent transcriptional activity. Plays a role in the regulation of lysosome-mediated degradation of protein aggregates by autophagy in neuronal cells. Deacetylates FOXO1 in response to oxidative stress or serum deprivation, thereby negatively regulating FOXO1-mediated autophagy. Deacetylates a broad range of transcription factors and co-regulators regulating target gene expression. Deacetylates transcriptional factor FOXO3 stimulating the ubiquitin ligase SCF(SKP2)-mediated FOXO3 ubiquitination and degradation. Deacetylates HIF1A and therefore promotes HIF1A degradation and inhibition of HIF1A transcriptional activity in tumor cells in response to hypoxia. Deacetylates RELA in the cytoplasm inhibiting NF-kappaB-dependent transcription activation upon TNF-alpha stimulation. Inhibits transcriptional activation by deacetylating p53/TP53 and EP300. Also deacetylates EIF5A. Functions as a negative regulator on oxidative stress-tolerance in response to anoxia-reoxygenation conditions. Plays a role as tumor suppressor. In addition to protein deacetylase activity, also has activity toward long-chain fatty acyl groups and mediates protein-lysine demyristoylation and depalmitoylation of target proteins, such as ARF6 and KRAS, thereby regulating their association with membranes. This Rattus norvegicus (Rat) protein is NAD-dependent protein deacetylase sirtuin-2 (Sirt2).